A 267-amino-acid polypeptide reads, in one-letter code: Interleukin-2 receptor subunit alpha (267 aa).

Residues 1–21 (MEPHLLMLGFLSFTIVPGCWA) form the signal peptide. A Sushi 1 domain is found at 22–79 (ELCLYDPPEVPNATFKALSYKNGTILNCECKRGFRRLNELVYMACLGNSWSNNCQCTS). The Extracellular portion of the chain corresponds to 22-235 (ELCLYDPPEV…ETFVFTKEYQ (214 aa)). 3 disulfide bridges follow: C24–C66, C49–C75, and C51–C77. N33 and N43 each carry an N-linked (GlcNAc...) asparagine glycan. Residues 82-93 (HDNSREQVTPQP) are compositionally biased toward polar residues. The disordered stretch occupies residues 82–108 (HDNSREQVTPQPEGQKEQQTTDTQKST). Residues 98–108 (EQQTTDTQKST) are compositionally biased toward low complexity. The Sushi 2 domain occupies 118–181 (GHCREPPPWR…WTHPQLTCVD (64 aa)). Disulfide bonds link C120-C163 and C147-C179. The segment at 191–215 (SEESQGSRNSFPESEASCPTPNTDF) is disordered. Residues 192–215 (EESQGSRNSFPESEASCPTPNTDF) show a composition bias toward polar residues. The chain crosses the membrane as a helical span at residues 236-256 (VAVASCIFLLLSILLLSGFTW). At 257–267 (QHRWRKSRRTI) the chain is on the cytoplasmic side.

As to quaternary structure, non-covalent dimer of an alpha and a beta subunit. IL2R exists in 3 different forms: a high affinity dimer, an intermediate affinity monomer (beta subunit), and a low affinity monomer (alpha subunit). The high and intermediate affinity forms also associate with a gamma subunit.

The protein localises to the membrane. In terms of biological role, receptor for interleukin-2. The receptor is involved in the regulation of immune tolerance by controlling regulatory T cells (TREGs) activity. TREGs suppress the activation and expansion of autoreactive T-cells. In Rattus norvegicus (Rat), this protein is Interleukin-2 receptor subunit alpha (Il2ra).